The chain runs to 447 residues: Tubulin beta-2 chain (447 aa).

GTP-binding residues include Gln11, Glu69, Ser138, Gly142, Thr143, Gly144, Asn204, and Asn226. Glu69 is a binding site for Mg(2+). The tract at residues 419 to 447 is disordered; sequence VSEYQQYQDATADDEGEYEDEEEEADLQD. Positions 429-447 are enriched in acidic residues; sequence TADDEGEYEDEEEEADLQD.

Belongs to the tubulin family. As to quaternary structure, dimer of alpha and beta chains. A typical microtubule is a hollow water-filled tube with an outer diameter of 25 nm and an inner diameter of 15 nM. Alpha-beta heterodimers associate head-to-tail to form protofilaments running lengthwise along the microtubule wall with the beta-tubulin subunit facing the microtubule plus end conferring a structural polarity. Microtubules usually have 13 protofilaments but different protofilament numbers can be found in some organisms and specialized cells. The cofactor is Mg(2+). In terms of tissue distribution, expressed in leaf sheaths and suspension cultured cells.

The protein localises to the cytoplasm. Its subcellular location is the cytoskeleton. Its function is as follows. Tubulin is the major constituent of microtubules, a cylinder consisting of laterally associated linear protofilaments composed of alpha- and beta-tubulin heterodimers. Microtubules grow by the addition of GTP-tubulin dimers to the microtubule end, where a stabilizing cap forms. Below the cap, tubulin dimers are in GDP-bound state, owing to GTPase activity of alpha-tubulin. This is Tubulin beta-2 chain (TUBB2) from Oryza sativa subsp. japonica (Rice).